We begin with the raw amino-acid sequence, 235 residues long: Small heat shock protein, chloroplastic (235 aa).

Disordered stretches follow at residues 1-23 and 51-80; these read MAYT…TSKI and TGDN…ERRP. Over residues 52-63 the composition is skewed to basic and acidic residues; the sequence is GDNKDTSVDVHH. A compositionally biased stretch (polar residues) spans 64 to 74; it reads SSAQGGNNQGT. Positions 126–235 constitute a sHSP domain; that stretch reads SGTGEIRTPW…EKKVIDVQIN (110 aa).

It belongs to the small heat shock protein (HSP20) family. In fruits, flowers, leaves, and stems.

It localises to the plastid. It is found in the chloroplast. The protein is Small heat shock protein, chloroplastic (HSP21) of Solanum lycopersicum (Tomato).